We begin with the raw amino-acid sequence, 498 residues long: MGEKQQPSMNDQLRVRREKMQELRDKGIDPFGHRFERTHLAAQLHEKYSDMTKEELDEQGVVATIAGRMISKRGKGKVGFADLKDRSGKMQLYVRKDVLGEDVYKVFKRSDIGDFLGVTGDVMKTDMGELTIKVTGLTFLSKALRPLPDKFHGLQNVEQIYRQRYLDLIANDDSMDRFRKRTKIVSAVRRYLDGNDFAEVETPVLHTQAGGASARPFITHHNALDINLYLRIALELHLKRLIVGGMERVYEIGRVFRNEGIDTRHNPEFTMLETYAAYFDFHDVMDETEGIFKAAVAAVSDDGKITYQGTELDLGQDFERLHMVDAIKKYAGVDFWPKMSVEDAKKLADENGIHYESWWTVGHIINEFFEEKVQDQLKQPVFIYGHPVEISPLAKKNAEDDRFTDRFELYILGNEYGNAFTELNDPIDQRARFEAQVAEREAGNDEAEGIDEDYIEALEYGMPPTGGLGIGIDRLVMLLTDAPSIRDVLLFPTMKPID.

2 residues coordinate Mg(2+): Glu-408 and Glu-415.

It belongs to the class-II aminoacyl-tRNA synthetase family. Homodimer. It depends on Mg(2+) as a cofactor.

Its subcellular location is the cytoplasm. The enzyme catalyses tRNA(Lys) + L-lysine + ATP = L-lysyl-tRNA(Lys) + AMP + diphosphate. This is Lysine--tRNA ligase from Pediococcus pentosaceus (strain ATCC 25745 / CCUG 21536 / LMG 10740 / 183-1w).